A 58-amino-acid polypeptide reads, in one-letter code: UPF0509 protein YciZ (58 aa).

The protein belongs to the UPF0509 family.

The chain is UPF0509 protein YciZ from Escherichia fergusonii (strain ATCC 35469 / DSM 13698 / CCUG 18766 / IAM 14443 / JCM 21226 / LMG 7866 / NBRC 102419 / NCTC 12128 / CDC 0568-73).